The sequence spans 475 residues: Ankyrin repeat, SAM and basic leucine zipper domain-containing protein 1 (475 aa).

The segment covering 1 to 10 has biased composition (low complexity); sequence MAAGRLRGLA. A disordered region spans residues 1–24; sequence MAAGRLRGLAVAGGGESSESDDDG. Phosphoserine is present on residues S17, S18, and S20. 6 ANK repeats span residues 45 to 74, 78 to 107, 110 to 144, 148 to 177, 181 to 210, and 214 to 243; these read EKNETFKKALTTGDISLVQELLNSGISVDS, YGWTPLMYAASVSNVELVRVLLDRGANANF, DKQTILITTCSSRGSEEQIVKCVELLLSRNADPNV, RLMTPIMYAARDGHPQVVALLVAHGAEVNT, SGYTALTWAARQGHKNVVLKLLELGADKML, and DGNIPSEIAKRYKHLEIFSLLSLSLNPLKG. One can recognise an SAM domain in the interval 272–334; that stretch reads SYTAFGDLEV…KILAALKELD (63 aa).

As to quaternary structure, interacts with DDX4, PIWIL1, RANBP9 and TDRD1.

Its subcellular location is the cytoplasm. In terms of biological role, plays a central role during spermatogenesis by repressing transposable elements and preventing their mobilization, which is essential for the germline integrity. Acts via the piRNA metabolic process, which mediates the repression of transposable elements during meiosis by forming complexes composed of piRNAs and Piwi proteins and governs the methylation and subsequent repression of transposons. Its association with pi-bodies suggests a participation in the primary piRNAs metabolic process. Required prior to the pachytene stage to facilitate the production of multiple types of piRNAs, including those associated with repeats involved in the regulation of retrotransposons. May act by mediating protein-protein interactions during germ cell maturation. The sequence is that of Ankyrin repeat, SAM and basic leucine zipper domain-containing protein 1 (ASZ1) from Carollia perspicillata (Seba's short-tailed bat).